A 449-amino-acid chain; its full sequence is Nuclear hormone receptor family member nhr-43 (449 aa).

The segment at residues 44–122 is a DNA-binding region (nuclear receptor); it reads NIHCRVCERR…VGLNVDAVVG (79 aa). 2 consecutive NR C4-type zinc fingers follow at residues 47-68 and 84-105; these read CRVCERRYDGSQHFGIDICRAC and CRRGTNKCELNTVSRKTTCQKC. A compositionally biased stretch (basic and acidic residues) spans 125–142; the sequence is SPDHVKTTSRDESVKKED. Positions 125–154 are disordered; it reads SPDHVKTTSRDESVKKEDEESDTGSEGKSC. Residues 200-449 enclose the NR LBD domain; that stretch reads NYNEFTKSRL…SDLNAYLYSI (250 aa).

Its subcellular location is the nucleus. Functionally, ligand-activated transcription factor. Positively modulates expression of homeobox protein lin-39, perhaps by binding to the sequence motif 5'-TGAC-3' in regulatory regions of the lin-39 gene, acting in the embryo, and also in the vulval lineage. The chain is Nuclear hormone receptor family member nhr-43 from Caenorhabditis elegans.